A 505-amino-acid chain; its full sequence is Cysteine--tRNA ligase (505 aa).

Cys33 contributes to the Zn(2+) binding site. The short motif at 35–45 is the 'HIGH' region element; the sequence is PTVYDFAHIGN. Cys229, His268, and Glu272 together coordinate Zn(2+). The short motif at 301 to 305 is the 'KMSKS' region element; it reads KMSKS. Lys304 lines the ATP pocket.

Belongs to the class-I aminoacyl-tRNA synthetase family. In terms of assembly, monomer. Zn(2+) serves as cofactor.

It is found in the cytoplasm. It carries out the reaction tRNA(Cys) + L-cysteine + ATP = L-cysteinyl-tRNA(Cys) + AMP + diphosphate. The protein is Cysteine--tRNA ligase of Brucella anthropi (strain ATCC 49188 / DSM 6882 / CCUG 24695 / JCM 21032 / LMG 3331 / NBRC 15819 / NCTC 12168 / Alc 37) (Ochrobactrum anthropi).